We begin with the raw amino-acid sequence, 438 residues long: 23S rRNA (uracil(1939)-C(5))-methyltransferase RlmD (438 aa).

The 59-residue stretch at 11–69 folds into the TRAM domain; the sequence is LQPESKHQQVLVEKLDHQGAGIAYLNKKPLFIDGTLPGEEVVTQLTESKSKFARGKLIK. [4Fe-4S] cluster-binding residues include cysteine 82, cysteine 88, cysteine 91, and cysteine 169. Positions 272, 301, 306, 322, 349, and 370 each coordinate S-adenosyl-L-methionine. The Nucleophile role is filled by cysteine 396.

The protein belongs to the class I-like SAM-binding methyltransferase superfamily. RNA M5U methyltransferase family. RlmD subfamily.

It carries out the reaction uridine(1939) in 23S rRNA + S-adenosyl-L-methionine = 5-methyluridine(1939) in 23S rRNA + S-adenosyl-L-homocysteine + H(+). In terms of biological role, catalyzes the formation of 5-methyl-uridine at position 1939 (m5U1939) in 23S rRNA. This Vibrio vulnificus (strain CMCP6) protein is 23S rRNA (uracil(1939)-C(5))-methyltransferase RlmD.